A 124-amino-acid chain; its full sequence is Large ribosomal subunit protein eL31 (124 aa).

This sequence belongs to the eukaryotic ribosomal protein eL31 family.

This Aedes aegypti (Yellowfever mosquito) protein is Large ribosomal subunit protein eL31 (RpL31).